The following is a 380-amino-acid chain: Transporter PPE51 (380 aa).

The residue at position 1 (M1) is an N-acetylmethionine.

It belongs to the mycobacterial PPE family. As to quaternary structure, interacts with PE19 and PE25.

The protein localises to the cell outer membrane. Its function is as follows. Small molecule-selective channel required for the uptake of nutrients across the outer mycomembrane. Transports glycerol and glucose. Involved in sensitivity to M.tuberculosis growth inhibitory agrichemical 3,3-bis-di(methylsulfonyl)propionamide (3bMP1). Transports maltose and lactose disaccharides. Involved in sensitivity to bactericidal thio-disaccharide T-6 compound (1,6-anhydro-3-deoxy-4-S-(2,3,4,6-tetra-O-acetyl-beta-D-glucopyranosyl)-D-glycero-hexopyranos-2-ulose). Transports extracellular trehalose, a component of the cell envelope, and trehalose analog, 6-azido trehalose (6-TreAz), which has antimycobacterial activity. In terms of biological role, plays a role in response to starvation and stress, likely environment within the host. Inhibits canonical autophagy in infected mouse RAW264.7 macrophages. Inhibits autophagy and enhances intracellular bacterial survival when expressed in human macrophage-like THP-1 cells. Inhibits Toll-like receptor 2 (TLR2)-dependent signaling leading to autophagy inhibition, increased intracellular bacterial survival, reduced phagocytosis and reduced secretion of interleukin 6 (IL-6) and IL-1 in infected mouse primary bone marrow-derived macrophage (BMDM) cells. Required for virulence and persistence in the lungs and spleens of intranasally infected C57BL/6J mice. Blocks the antibacterial effects of TLR2 activation, suppresses MHC class II-dependent antigen presentation, and reduces IFN-gamma and TNF-alpha-producing CD4(+) T cells during infection in C57BL/6J mice. This Mycobacterium tuberculosis (strain CDC 1551 / Oshkosh) protein is Transporter PPE51 (PPE51).